A 142-amino-acid polypeptide reads, in one-letter code: MVLSPADKTNVKAAWGKVGAHAGDYGAEALERMFLSFPTTKTYFPHFDLSHGSAQVKGHGKKVADALTNAVAHVDDMPNALSALSDLHAHKLRVDPVNFKLLSHCLLVTLAAHHPAEFTPAVHASLDKFLASVSTVLTSKYR.

The 141-residue stretch at 2–142 folds into the Globin domain; it reads VLSPADKTNV…VSTVLTSKYR (141 aa). Histidine 59 serves as a coordination point for O2. Histidine 88 contacts heme b.

The protein belongs to the globin family. In terms of assembly, heterotetramer of two alpha chains and two beta chains. Red blood cells.

Functionally, involved in oxygen transport from the lung to the various peripheral tissues. Its function is as follows. Hemopressin acts as an antagonist peptide of the cannabinoid receptor CNR1. Hemopressin-binding efficiently blocks cannabinoid receptor CNR1 and subsequent signaling. This Hylobates lar (Lar gibbon) protein is Hemoglobin subunit alpha-1 (HBA1).